A 292-amino-acid polypeptide reads, in one-letter code: uncharacterized protein (292 aa).

5 helical membrane passes run 57–77 (IISL…LTLI), 101–121 (VYVF…FNFM), 143–163 (LIYA…AVLI), 184–204 (VVIT…NFVL), and 271–291 (IAFL…DRGI).

This sequence belongs to the CbiQ family.

It is found in the cell membrane. This is an uncharacterized protein from Methanocaldococcus jannaschii (strain ATCC 43067 / DSM 2661 / JAL-1 / JCM 10045 / NBRC 100440) (Methanococcus jannaschii).